A 319-amino-acid polypeptide reads, in one-letter code: Phosphatidylglycerol--prolipoprotein diacylglyceryl transferase (319 aa).

Helical transmembrane passes span 21–41 (PIPI…AIWL), 50–70 (GGNP…GIIG), and 98–118 (NGGL…AVFF). Arg144 is an a 1,2-diacyl-sn-glycero-3-phospho-(1'-sn-glycerol) binding site. The next 2 helical transmembrane spans lie at 191–211 (VHPT…LLMW) and 254–274 (INTI…FLLK). A disordered region spans residues 295–319 (AVASPDGKPLPKAGEGIDGETPSTR).

It belongs to the Lgt family.

Its subcellular location is the cell membrane. It catalyses the reaction L-cysteinyl-[prolipoprotein] + a 1,2-diacyl-sn-glycero-3-phospho-(1'-sn-glycerol) = an S-1,2-diacyl-sn-glyceryl-L-cysteinyl-[prolipoprotein] + sn-glycerol 1-phosphate + H(+). It functions in the pathway protein modification; lipoprotein biosynthesis (diacylglyceryl transfer). Functionally, catalyzes the transfer of the diacylglyceryl group from phosphatidylglycerol to the sulfhydryl group of the N-terminal cysteine of a prolipoprotein, the first step in the formation of mature lipoproteins. This Corynebacterium glutamicum (strain R) protein is Phosphatidylglycerol--prolipoprotein diacylglyceryl transferase.